The primary structure comprises 254 residues: tRNA (guanine-N(1)-)-methyltransferase (254 aa).

S-adenosyl-L-methionine contacts are provided by residues glycine 121 and leucine 141–leucine 146.

Belongs to the RNA methyltransferase TrmD family. As to quaternary structure, homodimer.

The protein localises to the cytoplasm. The enzyme catalyses guanosine(37) in tRNA + S-adenosyl-L-methionine = N(1)-methylguanosine(37) in tRNA + S-adenosyl-L-homocysteine + H(+). Specifically methylates guanosine-37 in various tRNAs. The protein is tRNA (guanine-N(1)-)-methyltransferase of Psychrobacter cryohalolentis (strain ATCC BAA-1226 / DSM 17306 / VKM B-2378 / K5).